The sequence spans 461 residues: MTAINRILIVDDEDNVRRMLSTAFALQGFETHCANNGRTALHLFADIHPDVVLMDIRMPEMDGIKALKEMRSHETRTPVILMTAYAEVETAVEALRCGAFDYVIKPFDLDELNLIVQRALQLQSMKKEIRHLHQALSTSWQWGHILTNSPAMMDICKDTAKIALSQASVLISGESGTGKELIARAIHYNSRRAKGPFIKVNCAALPESLLESELFGHEKGAFTGAQTLRQGLFERANEGTLLLDEIGEMPLVLQAKLLRILQEREFERIGGHQTIKVDIRIIAATNRDLQAMVKEGTFREDLFYRLNVIHLILPPLRDRREDISLLANHFLQKFSSENQRDIIDIDPMAMSLLTAWSWPGNIRELSNVIERAVVMNSGPIIFSEDLPPQIRQPVCNAGEVKTAPVGERNLKEEIKRVEKRIIMEVLEQQEGNRTRTALMLGISRRALMYKLQEYGIDPADV.

Positions 6–120 (RILIVDDEDN…ELNLIVQRAL (115 aa)) constitute a Response regulatory domain. The residue at position 55 (Asp-55) is a 4-aspartylphosphate. His-73 carries the phosphohistidine modification. The Sigma-54 factor interaction domain maps to 145 to 374 (ILTNSPAMMD…LSNVIERAVV (230 aa)). ATP is bound by residues 173–180 (GESGTGKE) and 236–245 (ANEGTLLLDE). The segment at residues 433 to 452 (RTRTALMLGISRRALMYKLQ) is a DNA-binding region (H-T-H motif).

Phosphorylated by AtoS. Contains two phosphorylation sites, which are both involved in the transduction of the acetoacetate signal. Asp-55 is probably the primary phosphorylation site, but either both residues can be phosphorylated independently by AtoS or the phosphate group can be transferred between them. In terms of processing, the N-terminus is blocked.

It localises to the cytoplasm. Functionally, member of the two-component regulatory system AtoS/AtoC. In the presence of acetoacetate, AtoS/AtoC stimulates the expression of the atoDAEB operon, leading to short chain fatty acid catabolism and activation of the poly-(R)-3-hydroxybutyrate (cPHB) biosynthetic pathway. Also induces the operon in response to spermidine. Involved in the regulation of motility and chemotaxis, via transcriptional induction of the flagellar regulon. AtoC acts by binding directly to the promoter region of the target genes. In addition to its role as a transcriptional regulator, functions as a post-translational regulator that inhibits polyamine biosynthesis via regulation of ornithine decarboxylase (ODC). This Escherichia coli (strain K12) protein is Regulatory protein AtoC (atoC).